A 527-amino-acid chain; its full sequence is MFEFFMETAPATTTGLPLSAILAIFFSFIIGIVFGGMALFVFRGFIMNRQLRIAQRKATKMLADSKLEAKDVLVEAKREADKTRNSAETELKERRSELAKQENRVIQKTEALDRKLENLEQREQSLTNREKSIDETQSQIEEIRENELKRLEEVANMTTEQAKTSLLEMLEGEMQQETSRRLREWEIKIKAEADEKAREVVSQAIQRCASDVVTETTTNVVPLPSDEMKGRLIGREGRNIRALEQATGVDLIIDDTPEAVTISSFDPVRREVARQALSKLIIDGRIHPARIEEVVTKAKEEVEAAMIASGEQAAYQAGVHGLRPEIIKVMGRLKYRTSYGQNVLQHSIEVAQMSGMIGSELGVNVTLARRAGFLHDIGKAVDRDVEGTHTQIGADMVKQWEKSPEVIKGVAEHHFDTPTVSIWGFIVSAADAISSARPGARRESLENYIKRLKALEEIADSFKGVEKSFAIQAGREVRIMVKPDEIDDLGAMRLARDIVKRIEDGLEYPGQIKVTVIRETRSVDFAK.

A helical transmembrane segment spans residues 21-41 (ILAIFFSFIIGIVFGGMALFV). Residues 78-97 (READKTRNSAETELKERRSE) form a disordered region. A KH domain is found at 217-302 (TTNVVPLPSD…EVVTKAKEEV (86 aa)). Residues 343 to 436 (VLQHSIEVAQ…VSAADAISSA (94 aa)) enclose the HD domain.

It belongs to the RNase Y family.

Its subcellular location is the cell membrane. In terms of biological role, endoribonuclease that initiates mRNA decay. The sequence is that of Ribonuclease Y from Dehalococcoides mccartyi (strain ATCC BAA-2100 / JCM 16839 / KCTC 5957 / BAV1).